Reading from the N-terminus, the 580-residue chain is DBIRD complex subunit ZNF326 (580 aa).

Residues 1-124 form a mediates transcriptional activation region; that stretch reads MDFEDDYVHS…YRNSLDSFGG (124 aa). Residues serine 48, serine 56, serine 63, serine 69, serine 81, serine 82, serine 91, serine 106, serine 114, serine 118, serine 121, and serine 137 each carry the phosphoserine modification. Lysine 140 participates in a covalent cross-link: Glycyl lysine isopeptide (Lys-Gly) (interchain with G-Cter in SUMO2). The interval 156 to 196 is disordered; it reads SYSSFSSPHMKPAPVGSRGRGTPAYPESTFGSRSYDAFGGP. At arginine 173 the chain carries Omega-N-methylarginine. At serine 212 the chain carries Phosphoserine. Arginine 235 is subject to Omega-N-methylarginine. A Bipartite nuclear localization signal motif is present at residues 238 to 260; it reads KRKMMQIFIKPGGAFIKKPKLAK. Lysine 240 is covalently cross-linked (Glycyl lysine isopeptide (Lys-Gly) (interchain with G-Cter in SUMO2)). Residue lysine 247 is modified to N6-acetyllysine; alternate. Residue lysine 247 forms a Glycyl lysine isopeptide (Lys-Gly) (interchain with G-Cter in SUMO2); alternate linkage. Residues lysine 254 and lysine 264 each participate in a glycyl lysine isopeptide (Lys-Gly) (interchain with G-Cter in SUMO2) cross-link. Residues 256-302 form a disordered region; the sequence is PKLAKPMDKMNLSKSPTKTDPKNEEEEKRRIEARREKQRRRREKNSE. Position 270 is a phosphoserine (serine 270). The segment covering 272–290 has biased composition (basic and acidic residues); it reads TKTDPKNEEEEKRRIEARR. Residues 314 to 336 form a C2H2 AKAP95-type 1 zinc finger; sequence CSFCKFRTFEEKDIELHLESSSH. A Glycyl lysine isopeptide (Lys-Gly) (interchain with G-Cter in SUMO2) cross-link involves residue lysine 401. The segment at 407-430 adopts a C2H2 AKAP95-type 2 zinc-finger fold; sequence CSACSVYIPALHSSVQLHLKSPDH. Glycyl lysine isopeptide (Lys-Gly) (interchain with G-Cter in SUMO2) cross-links involve residues lysine 459 and lysine 467. Residues 470 to 580 are disordered; it reads NPFEIQDHPQ…ATEQCEHRQM (111 aa). Over residues 483–529 the composition is skewed to acidic residues; the sequence is IEGDEEDEEKIDEPIEEEEEEEEEEEEEGEEAGSVEEEGDVEGEEGT. A compositionally biased stretch (low complexity) spans 530 to 539; sequence AEAAAAGEAD. The segment covering 540–562 has biased composition (acidic residues); sequence AVGEAEGAGEAEEAEEEEEEEGT.

The protein belongs to the AKAP95 family. Component of the DBIRD complex. Interacts with CCAR2; the interaction is direct. As to expression, ubiquitously expressed in adult tissues. Highly expressed in neuronal tissues such as brain and neural tube.

Its subcellular location is the nucleus matrix. In terms of biological role, core component of the DBIRD complex, a multiprotein complex that acts at the interface between core mRNP particles and RNA polymerase II (RNAPII) and integrates transcript elongation with the regulation of alternative splicing: the DBIRD complex affects local transcript elongation rates and alternative splicing of a large set of exons embedded in (A + T)-rich DNA regions. May also play a role in neuronal differentiation. Able to bind DNA and activate expression in vitro. The chain is DBIRD complex subunit ZNF326 (Znf326) from Mus musculus (Mouse).